The chain runs to 249 residues: Orotidine 5'-phosphate decarboxylase (249 aa).

Substrate contacts are provided by residues Asp21, Lys43, Asp72–Thr81, Thr128, Arg193, Gln204, Gly224, and Arg225. Lys74 serves as the catalytic Proton donor.

It belongs to the OMP decarboxylase family. Type 1 subfamily. In terms of assembly, homodimer.

The catalysed reaction is orotidine 5'-phosphate + H(+) = UMP + CO2. Its pathway is pyrimidine metabolism; UMP biosynthesis via de novo pathway; UMP from orotate: step 2/2. Functionally, catalyzes the decarboxylation of orotidine 5'-monophosphate (OMP) to uridine 5'-monophosphate (UMP). The sequence is that of Orotidine 5'-phosphate decarboxylase from Desulfosudis oleivorans (strain DSM 6200 / JCM 39069 / Hxd3) (Desulfococcus oleovorans).